A 141-amino-acid polypeptide reads, in one-letter code: Zinc finger HIT domain-containing protein 3 (141 aa).

Residues 1–28 form an HIT-type; degenerate zinc finger; sequence LEKPKYRCPACRVPYCSVACFRKHKEQC. Zn(2+) contacts are provided by cysteine 8, cysteine 11, histidine 24, and cysteine 28. Serine 66 is subject to Phosphoserine.

In terms of assembly, thyroid receptor interacting proteins (TRIPs) specifically interact with the ligand binding domain of the thyroid receptor (TR). Requires the presence of thyroid hormone for its interaction. Interacts with NUFIP1. Interacts (via HIT-type zinc finger) with the RUVBL1/RUVBL2 complex in the presence of ADP.

The protein resides in the cytoplasm. Its subcellular location is the nucleus. The chain is Zinc finger HIT domain-containing protein 3 (ZNHIT3) from Pan troglodytes (Chimpanzee).